Reading from the N-terminus, the 35-residue chain is Fatty acid synthase (35 aa).

The active site involves Ser12.

As to quaternary structure, homodimer which is arranged in a head to tail fashion. Interacts with CEACAM1; this interaction is insulin and phosphorylation-dependent; reduces fatty-acid synthase activity.

Its subcellular location is the cytoplasm. The protein localises to the melanosome. It catalyses the reaction acetyl-CoA + n malonyl-CoA + 2n NADPH + 2n H(+) = a long-chain fatty acid + (n+1) CoA + n CO2 + 2n NADP(+).. In terms of biological role, fatty acid synthetase catalyzes the formation of long-chain fatty acids from acetyl-CoA, malonyl-CoA and NADPH. This multifunctional protein has 7 catalytic activities as an acyl carrier protein. This fragment is from the acyltransferase domain of the fatty acid synthetase. This chain is Fatty acid synthase (FASN), found in Capra hircus (Goat).